The sequence spans 201 residues: Potassium-transporting ATPase KdpC subunit (201 aa).

The helical transmembrane segment at Pro-7 to Met-27 threads the bilayer.

Belongs to the KdpC family. In terms of assembly, the system is composed of three essential subunits: KdpA, KdpB and KdpC.

The protein resides in the cell inner membrane. In terms of biological role, part of the high-affinity ATP-driven potassium transport (or Kdp) system, which catalyzes the hydrolysis of ATP coupled with the electrogenic transport of potassium into the cytoplasm. This subunit acts as a catalytic chaperone that increases the ATP-binding affinity of the ATP-hydrolyzing subunit KdpB by the formation of a transient KdpB/KdpC/ATP ternary complex. This is Potassium-transporting ATPase KdpC subunit from Xanthobacter autotrophicus (strain ATCC BAA-1158 / Py2).